The sequence spans 259 residues: Adenosylcobinamide-GDP ribazoletransferase (259 aa).

The next 6 helical transmembrane spans lie at 27 to 47 (ITFLPLVVTVGALIGDSILYI), 51 to 71 (FSHLIASFLSISSIIIYNGLN), 100 to 120 (VGAGGIFAVIFVYGIAVLSLA), 124 to 144 (LYIGLVGILIGQVVSGSSMMI), 175 to 195 (FLAIPIIVSFIFSPLYVVIVA), and 219 to 239 (VIGFLGEFSRSLFIFMLIIIA).

The protein belongs to the CobS family. It depends on Mg(2+) as a cofactor.

It localises to the cell membrane. The catalysed reaction is alpha-ribazole + adenosylcob(III)inamide-GDP = adenosylcob(III)alamin + GMP + H(+). It carries out the reaction alpha-ribazole 5'-phosphate + adenosylcob(III)inamide-GDP = adenosylcob(III)alamin 5'-phosphate + GMP + H(+). It functions in the pathway cofactor biosynthesis; adenosylcobalamin biosynthesis; adenosylcobalamin from cob(II)yrinate a,c-diamide: step 7/7. Joins adenosylcobinamide-GDP and alpha-ribazole to generate adenosylcobalamin (Ado-cobalamin). Also synthesizes adenosylcobalamin 5'-phosphate from adenosylcobinamide-GDP and alpha-ribazole 5'-phosphate. The sequence is that of Adenosylcobinamide-GDP ribazoletransferase from Thermoplasma volcanium (strain ATCC 51530 / DSM 4299 / JCM 9571 / NBRC 15438 / GSS1).